Reading from the N-terminus, the 218-residue chain is Telomere repeats-binding bouquet formation protein 2 (218 aa).

A disordered region spans residues 117–143; sequence HDRMASSDKENIRPTPEHKQELSKSAE.

It belongs to the TERB2 family. Component of the MAJIN-TERB1-TERB2 complex, composed of MAJIN, TERB1 and TERB2. As to expression, specifically expressed in germline tissues.

It is found in the chromosome. The protein localises to the telomere. The protein resides in the nucleus inner membrane. In terms of biological role, meiosis-specific telomere-associated protein involved in meiotic telomere attachment to the nucleus inner membrane, a crucial step for homologous pairing and synapsis. Component of the MAJIN-TERB1-TERB2 complex, which promotes telomere cap exchange by mediating attachment of telomeric DNA to the inner nuclear membrane and replacement of the protective cap of telomeric chromosomes: in early meiosis, the MAJIN-TERB1-TERB2 complex associates with telomeric DNA and the shelterin/telosome complex. During prophase, the complex matures and promotes release of the shelterin/telosome complex from telomeric DNA. The sequence is that of Telomere repeats-binding bouquet formation protein 2 from Mus musculus (Mouse).